We begin with the raw amino-acid sequence, 388 residues long: Lipid-A-disaccharide synthase (388 aa).

Belongs to the LpxB family.

It carries out the reaction a lipid X + a UDP-2-N,3-O-bis[(3R)-3-hydroxyacyl]-alpha-D-glucosamine = a lipid A disaccharide + UDP + H(+). It functions in the pathway bacterial outer membrane biogenesis; LPS lipid A biosynthesis. Condensation of UDP-2,3-diacylglucosamine and 2,3-diacylglucosamine-1-phosphate to form lipid A disaccharide, a precursor of lipid A, a phosphorylated glycolipid that anchors the lipopolysaccharide to the outer membrane of the cell. The protein is Lipid-A-disaccharide synthase of Burkholderia pseudomallei (strain K96243).